A 128-amino-acid polypeptide reads, in one-letter code: ACDVSIEGNDSMQFNTKSIVVDKTCKEFTINLKHTGKLPKAAMGHNVVVSKKSDESAVATDGMKAGLNNDYVKAGDERVIAHTSVIGGGETDSVTFDVSKLKEGEDYAFFCSFPGHWSIMKGTIELGS.

The Plastocyanin-like domain maps to 1-128; the sequence is ACDVSIEGND…IMKGTIELGS (128 aa). Cys2 and Cys25 form a disulfide bridge. Residues His45, Cys111, His116, and Met120 each coordinate Cu cation.

In terms of assembly, monomer. Interacts with the AAUA/AAUB heterotetramer complex. Requires Cu cation as cofactor.

The protein localises to the periplasm. In terms of biological role, transfers electrons from cytochrome c551 to cytochrome oxidase. Transfers electrons from the tryptophan tryptophylquinone of the aromatic amine dehydrogenase heterotetramer. The protein is Azurin of Alcaligenes faecalis.